The following is a 424-amino-acid chain: Hemagglutinin-esterase (424 aa).

The N-terminal stretch at 1–16 (MFLLPRFILVSCIIGS) is a signal peptide. Residues 7–127 (FILVSCIIGS…SNDIWMQNKG (121 aa)) form an esterase domain 1 region. Residues 17 to 392 (LGFYNPPTNV…PICVYDPLPV (376 aa)) lie on the Virion surface side of the membrane. S40 serves as the catalytic Nucleophile. A disulfide bond links C44 and C65. N54, N89, N114, N153, N236, and N301 each carry an N-linked (GlcNAc...) asparagine; by host glycan. Cystine bridges form between C113/C162, C197/C276, and C205/C249. The segment at 128-266 (LFYTQVYKNM…GNYLAISNEL (139 aa)) is receptor binding. Residues 267-379 (LLTVPTKAIC…RCPTAADINN (113 aa)) form an esterase domain 2 region. C307 and C312 are joined by a disulfide. A glycan (N-linked (GlcNAc...) asparagine; by host) is linked at N316. Residues D326 and H329 each act as charge relay system in the active site. C347 and C371 are oxidised to a cystine. N-linked (GlcNAc...) asparagine; by host glycosylation occurs at N358. A helical transmembrane segment spans residues 393–413 (ILLGILLGVAVIIIVVLLLYF). Topologically, residues 414–424 (MVDNGTRLHDA) are intravirion. N417 is a glycosylation site (N-linked (GlcNAc...) asparagine; by host).

Belongs to the influenza type C/coronaviruses hemagglutinin-esterase family. In terms of assembly, homodimer; disulfide-linked. Forms a complex with the M protein in the pre-Golgi. Associates then with S-M complex to form a ternary complex S-M-HE. In terms of processing, N-glycosylated in the host RER.

The protein resides in the virion membrane. It localises to the host cell membrane. The enzyme catalyses N-acetyl-9-O-acetylneuraminate + H2O = N-acetylneuraminate + acetate + H(+). The catalysed reaction is N-acetyl-4-O-acetylneuraminate + H2O = N-acetylneuraminate + acetate + H(+). Functionally, structural protein that makes short spikes at the surface of the virus. Contains receptor binding and receptor-destroying activities. Mediates de-O-acetylation of N-acetyl-4-O-acetylneuraminic acid, which is probably the receptor determinant recognized by the virus on the surface of erythrocytes and susceptible cells. This receptor-destroying activity is important for virus release as it probably helps preventing self-aggregation and ensures the efficient spread of the progeny virus from cell to cell. May serve as a secondary viral attachment protein for initiating infection, the spike protein being the major one. May become a target for both the humoral and the cellular branches of the immune system. This is Hemagglutinin-esterase from Homo sapiens (Human).